We begin with the raw amino-acid sequence, 408 residues long: Acetate kinase (408 aa).

N7 lines the Mg(2+) pocket. Position 14 (K14) interacts with ATP. Position 91 (R91) interacts with substrate. The active-site Proton donor/acceptor is D148. Residues 208–212 and 283–285 contribute to the ATP site; these read HLGNG and DLR. Position 388 (E388) interacts with Mg(2+).

This sequence belongs to the acetokinase family. As to quaternary structure, homodimer. Mg(2+) serves as cofactor. The cofactor is Mn(2+).

The protein localises to the cytoplasm. The enzyme catalyses acetate + ATP = acetyl phosphate + ADP. The protein operates within metabolic intermediate biosynthesis; acetyl-CoA biosynthesis; acetyl-CoA from acetate: step 1/2. Its function is as follows. Catalyzes the formation of acetyl phosphate from acetate and ATP. Can also catalyze the reverse reaction. The chain is Acetate kinase from Borrelia hermsii (strain HS1 / DAH).